The chain runs to 426 residues: Serine hydroxymethyltransferase (426 aa).

(6S)-5,6,7,8-tetrahydrofolate is bound by residues Leu113 and Gly117–Leu119. Lys222 carries the post-translational modification N6-(pyridoxal phosphate)lysine. Ser363–Phe365 is a binding site for (6S)-5,6,7,8-tetrahydrofolate.

This sequence belongs to the SHMT family. Homodimer. Requires pyridoxal 5'-phosphate as cofactor.

It is found in the cytoplasm. The catalysed reaction is (6R)-5,10-methylene-5,6,7,8-tetrahydrofolate + glycine + H2O = (6S)-5,6,7,8-tetrahydrofolate + L-serine. Its pathway is one-carbon metabolism; tetrahydrofolate interconversion. It functions in the pathway amino-acid biosynthesis; glycine biosynthesis; glycine from L-serine: step 1/1. In terms of biological role, catalyzes the reversible interconversion of serine and glycine with tetrahydrofolate (THF) serving as the one-carbon carrier. This reaction serves as the major source of one-carbon groups required for the biosynthesis of purines, thymidylate, methionine, and other important biomolecules. Also exhibits THF-independent aldolase activity toward beta-hydroxyamino acids, producing glycine and aldehydes, via a retro-aldol mechanism. This chain is Serine hydroxymethyltransferase, found in Bacteroides fragilis (strain ATCC 25285 / DSM 2151 / CCUG 4856 / JCM 11019 / LMG 10263 / NCTC 9343 / Onslow / VPI 2553 / EN-2).